Consider the following 166-residue polypeptide: CDP-archaeol synthase (166 aa).

4 helical membrane passes run 39–59, 61–81, 104–124, and 127–147; these read IRGF…QMYA, ISGL…LLAI, EWFL…TLLF, and IWML…LTPL.

The protein belongs to the CDP-archaeol synthase family. Mg(2+) is required as a cofactor.

Its subcellular location is the cell membrane. The catalysed reaction is 2,3-bis-O-(geranylgeranyl)-sn-glycerol 1-phosphate + CTP + H(+) = CDP-2,3-bis-O-(geranylgeranyl)-sn-glycerol + diphosphate. It participates in membrane lipid metabolism; glycerophospholipid metabolism. In terms of biological role, catalyzes the formation of CDP-2,3-bis-(O-geranylgeranyl)-sn-glycerol (CDP-archaeol) from 2,3-bis-(O-geranylgeranyl)-sn-glycerol 1-phosphate (DGGGP) and CTP. This reaction is the third ether-bond-formation step in the biosynthesis of archaeal membrane lipids. In Methanospirillum hungatei JF-1 (strain ATCC 27890 / DSM 864 / NBRC 100397 / JF-1), this protein is CDP-archaeol synthase.